Reading from the N-terminus, the 246-residue chain is DNA repair protein RecO (246 aa).

Belongs to the RecO family.

In terms of biological role, involved in DNA repair and RecF pathway recombination. This chain is DNA repair protein RecO, found in Maridesulfovibrio salexigens (strain ATCC 14822 / DSM 2638 / NCIMB 8403 / VKM B-1763) (Desulfovibrio salexigens).